The following is a 245-amino-acid chain: 1-(5-phosphoribosyl)-5-[(5-phosphoribosylamino)methylideneamino] imidazole-4-carboxamide isomerase (245 aa).

Aspartate 7 acts as the Proton acceptor in catalysis. Catalysis depends on aspartate 129, which acts as the Proton donor.

This sequence belongs to the HisA/HisF family.

Its subcellular location is the cytoplasm. The catalysed reaction is 1-(5-phospho-beta-D-ribosyl)-5-[(5-phospho-beta-D-ribosylamino)methylideneamino]imidazole-4-carboxamide = 5-[(5-phospho-1-deoxy-D-ribulos-1-ylimino)methylamino]-1-(5-phospho-beta-D-ribosyl)imidazole-4-carboxamide. Its pathway is amino-acid biosynthesis; L-histidine biosynthesis; L-histidine from 5-phospho-alpha-D-ribose 1-diphosphate: step 4/9. This Shigella boydii serotype 4 (strain Sb227) protein is 1-(5-phosphoribosyl)-5-[(5-phosphoribosylamino)methylideneamino] imidazole-4-carboxamide isomerase.